The following is a 293-amino-acid chain: ATP synthase gamma chain (293 aa).

Belongs to the ATPase gamma chain family. As to quaternary structure, F-type ATPases have 2 components, CF(1) - the catalytic core - and CF(0) - the membrane proton channel. CF(1) has five subunits: alpha(3), beta(3), gamma(1), delta(1), epsilon(1). CF(0) has three main subunits: a, b and c.

The protein localises to the cell inner membrane. Produces ATP from ADP in the presence of a proton gradient across the membrane. The gamma chain is believed to be important in regulating ATPase activity and the flow of protons through the CF(0) complex. The protein is ATP synthase gamma chain of Psychrobacter cryohalolentis (strain ATCC BAA-1226 / DSM 17306 / VKM B-2378 / K5).